We begin with the raw amino-acid sequence, 429 residues long: Hemoglobinase (429 aa).

Residues 1-19 (MMLFSLFLISILHILLVKC) form the signal peptide. The propeptide occupies 20–31 (QLDTNYEVSDET). H151 is a catalytic residue. Residues 288–309 (FQGSRDKSSSENDEPPMKPRHS) form a disordered region. Positions 292–429 (RDKSSSENDE…INEAIIKICG (138 aa)) are excised as a propeptide.

The protein belongs to the peptidase C13 family.

It carries out the reaction Hydrolysis of proteins and small molecule substrates at -Asn-|-Xaa- bonds.. Functionally, this protease is used by the parasite for degradation of the host globin. The polypeptide is Hemoglobinase (Schistosoma mansoni (Blood fluke)).